A 158-amino-acid chain; its full sequence is HTH-type transcriptional repressor NicR (158 aa).

An HTH marR-type domain is found at 20–152 (TEQVGHLLRK…ILYLLRKMID (133 aa)). The segment at residues 66-89 (QAELIKATAVDQATIRGIVERLKA) is a DNA-binding region (H-T-H motif).

It functions in the pathway cofactor degradation; nicotinate degradation [regulation]. Its function is as follows. Transcriptional repressor for the nicCDEFTP and nicXR operons, encoding the lower aerobic nicotinate degradation pathway. Acts under non-induced conditions: repression of the nicCDEFTP and nicXR operons becomes alleviated in presence of 6-hydroxynicotinate (6HNA). This Pseudomonas putida (strain ATCC 47054 / DSM 6125 / CFBP 8728 / NCIMB 11950 / KT2440) protein is HTH-type transcriptional repressor NicR (nicR).